A 531-amino-acid polypeptide reads, in one-letter code: Serine protease gd (531 aa).

Residues 1-19 form the signal peptide; sequence MRLHLAAILILCIEHVTKA. Positions 155–174 are disordered; sequence PEEEEVRKTDDKPPSTPHIQ. In terms of domain architecture, Peptidase S1 spans 246–531; sequence IESDSADSLP…FLDWITAFVI (286 aa). N272 carries an N-linked (GlcNAc...) asparagine glycan. An intrachain disulfide couples C280 to C296. Active-site charge relay system residues include H295 and D350. N397 and N445 each carry an N-linked (GlcNAc...) asparagine glycan. C432 and C449 form a disulfide bridge. S471 functions as the Charge relay system in the catalytic mechanism.

It belongs to the peptidase S1 family. Proteolytically activated by the protease ndl. As to expression, expression begins in previtellogenic stages and is seen in germline-derived nurse cells of the germarium. Expression continues throughout oogenesis with transcripts from the nurse cells accumulating in the oocytes. Most abundant in the ovaries, the level of protein decreases from the moment of egg laying and is essentially gone by 4 hours.

It localises to the secreted. Component of the extracellular signaling pathway that establishes the dorsal-ventral pathway of the embryo. A protease cascade involving ndl, gd, snk and ea results in activation of the spz Toll receptor ligand; acts downstream of ndl but upstream of snk and ea. Activation of ea requires activation of the ndl-gd-snk protease cascade and sulfation of a vitelline membrane component by pip. Localized activation of the Toll receptor in the ventral region of the embryo defines cell identities along the dorsal-ventral continuum. The polypeptide is Serine protease gd (Drosophila melanogaster (Fruit fly)).